Here is a 231-residue protein sequence, read N- to C-terminus: Superoxide dismutase [Mn] 1, mitochondrial (231 aa).

The N-terminal 29 residues, 1-29 (MAIRCVASRKTLAGLKETSSRLLRIRGIQ), are a transit peptide targeting the mitochondrion. Mn(2+) is bound by residues histidine 55 and histidine 103. Serine 124 carries the post-translational modification Phosphoserine. Positions 192 and 196 each coordinate Mn(2+).

This sequence belongs to the iron/manganese superoxide dismutase family. Homotetramer. It depends on Mn(2+) as a cofactor.

The protein resides in the mitochondrion matrix. It catalyses the reaction 2 superoxide + 2 H(+) = H2O2 + O2. Activated by MTM1. Destroys superoxide anion radicals which are normally produced within the cells and which are toxic to biological systems. This is Superoxide dismutase [Mn] 1, mitochondrial (MSD1) from Arabidopsis thaliana (Mouse-ear cress).